Consider the following 388-residue polypeptide: Chorismate synthase (388 aa).

NADP(+) is bound by residues R39 and R45. Residues 130–132, 251–252, G296, 311–315, and R337 contribute to the FMN site; these read RSS, NA, and KPIPT.

The protein belongs to the chorismate synthase family. Homotetramer. It depends on FMNH2 as a cofactor.

The enzyme catalyses 5-O-(1-carboxyvinyl)-3-phosphoshikimate = chorismate + phosphate. The protein operates within metabolic intermediate biosynthesis; chorismate biosynthesis; chorismate from D-erythrose 4-phosphate and phosphoenolpyruvate: step 7/7. Catalyzes the anti-1,4-elimination of the C-3 phosphate and the C-6 proR hydrogen from 5-enolpyruvylshikimate-3-phosphate (EPSP) to yield chorismate, which is the branch point compound that serves as the starting substrate for the three terminal pathways of aromatic amino acid biosynthesis. This reaction introduces a second double bond into the aromatic ring system. In Lactococcus lactis subsp. lactis (strain IL1403) (Streptococcus lactis), this protein is Chorismate synthase.